The sequence spans 127 residues: Small ribosomal subunit protein uS13 (127 aa).

The disordered stretch occupies residues 96-127 (LPCHGQRTSTNARTRKGPKRTAVKKKGAAKKK). Basic residues predominate over residues 108–127 (RTRKGPKRTAVKKKGAAKKK).

Belongs to the universal ribosomal protein uS13 family. As to quaternary structure, part of the 30S ribosomal subunit. Forms a loose heterodimer with protein S19. Forms two bridges to the 50S subunit in the 70S ribosome.

In terms of biological role, located at the top of the head of the 30S subunit, it contacts several helices of the 16S rRNA. In the 70S ribosome it contacts the 23S rRNA (bridge B1a) and protein L5 of the 50S subunit (bridge B1b), connecting the 2 subunits; these bridges are implicated in subunit movement. Contacts the tRNAs in the A and P-sites. This is Small ribosomal subunit protein uS13 from Desulfosudis oleivorans (strain DSM 6200 / JCM 39069 / Hxd3) (Desulfococcus oleovorans).